The following is a 236-amino-acid chain: UPF0173 metal-dependent hydrolase DSY1309 (236 aa).

This sequence belongs to the UPF0173 family.

This is UPF0173 metal-dependent hydrolase DSY1309 from Desulfitobacterium hafniense (strain Y51).